Here is a 186-residue protein sequence, read N- to C-terminus: Adenine phosphoribosyltransferase (186 aa).

This sequence belongs to the purine/pyrimidine phosphoribosyltransferase family. In terms of assembly, homodimer.

It localises to the cytoplasm. The enzyme catalyses AMP + diphosphate = 5-phospho-alpha-D-ribose 1-diphosphate + adenine. The protein operates within purine metabolism; AMP biosynthesis via salvage pathway; AMP from adenine: step 1/1. Its function is as follows. Catalyzes a salvage reaction resulting in the formation of AMP, that is energically less costly than de novo synthesis. This Xanthomonas campestris pv. campestris (strain B100) protein is Adenine phosphoribosyltransferase.